The primary structure comprises 278 residues: Probable ribosomal RNA small subunit methyltransferase A (278 aa).

Residues histidine 25, methionine 27, glycine 52, glutamate 73, aspartate 98, and asparagine 114 each coordinate S-adenosyl-L-methionine.

It belongs to the class I-like SAM-binding methyltransferase superfamily. rRNA adenine N(6)-methyltransferase family. RsmA subfamily.

The protein localises to the cytoplasm. In terms of biological role, specifically dimethylates two adjacent adenosines in the loop of a conserved hairpin near the 3'-end of 16S rRNA in the 30S particle. May play a critical role in biogenesis of 30S subunits. In Methanopyrus kandleri (strain AV19 / DSM 6324 / JCM 9639 / NBRC 100938), this protein is Probable ribosomal RNA small subunit methyltransferase A.